The sequence spans 670 residues: MKVSSQTTGELAENKFETIYDERYWESPPFKLVSDFEPKGSQPEAIEKLVDGLKKGEPFQTLLGVTGSGKTYTVANVINQIRKPTLVIAHNKTLAAQLYNEFREFFPENRVEYFVSYYDYYQPESYLPAKDQYIEKDAMINPKIEQMRLAATASLMSRQDVIVVASVSCIYGLGNPENFQKMGFELKVGDKVHRKEILEKLIDIQFERNDLELMPGRFRVKGDTIDIIPGYFDDIIRIELFGDEVDRISEVDKQTGQRKEDMDYFFVYPARHYVIPEEEQKSAIQFILEELEERLPELGLLESHRLKQRTLYDMEMIQETGSCKGIENYSRHFDHRQPGEKPFCLLDYFPDDFLLVIDESHQTIPQLHGMYNGDRSRKKSLVDYGFRLPSAFDNRPLKFEEFEKYMKNVIFVSATPADYEREHSSRVVEQIIRPTGLVDPEVEVRPLEGQVRDVMQEIRKIVERGDRALVTTLTKKLAEELTEFLAKNEIKARYLHSDIKTIERTEIIRELRLGKFDVLVGINLLREGLDIPEVGFIGILDADKEGFLRNSKSLIQIIGRAARNSSSRVVLYADNMTDSIKSAVQETERRRSMQIAYNEEHGIVPTTIRKPIREKVVDITDTKHIPKTDIPNVIIELDAEMREAADRLDFERAIQVRELIKKLEKEIKAV.

The Helicase ATP-binding domain occupies 51 to 433 (DGLKKGEPFQ…SSRVVEQIIR (383 aa)). 64-71 (GVTGSGKT) lines the ATP pocket. The Beta-hairpin signature appears at 117–140 (YYDYYQPESYLPAKDQYIEKDAMI). Residues 453-612 (DVMQEIRKIV…IVPTTIRKPI (160 aa)) enclose the Helicase C-terminal domain. One can recognise a UVR domain in the interval 631-666 (PNVIIELDAEMREAADRLDFERAIQVRELIKKLEKE).

It belongs to the UvrB family. In terms of assembly, forms a heterotetramer with UvrA during the search for lesions. Interacts with UvrC in an incision complex.

The protein resides in the cytoplasm. Functionally, the UvrABC repair system catalyzes the recognition and processing of DNA lesions. A damage recognition complex composed of 2 UvrA and 2 UvrB subunits scans DNA for abnormalities. Upon binding of the UvrA(2)B(2) complex to a putative damaged site, the DNA wraps around one UvrB monomer. DNA wrap is dependent on ATP binding by UvrB and probably causes local melting of the DNA helix, facilitating insertion of UvrB beta-hairpin between the DNA strands. Then UvrB probes one DNA strand for the presence of a lesion. If a lesion is found the UvrA subunits dissociate and the UvrB-DNA preincision complex is formed. This complex is subsequently bound by UvrC and the second UvrB is released. If no lesion is found, the DNA wraps around the other UvrB subunit that will check the other stand for damage. The chain is UvrABC system protein B from Methanosarcina mazei (strain ATCC BAA-159 / DSM 3647 / Goe1 / Go1 / JCM 11833 / OCM 88) (Methanosarcina frisia).